We begin with the raw amino-acid sequence, 96 residues long: Co-chaperonin GroES (96 aa).

This sequence belongs to the GroES chaperonin family. As to quaternary structure, heptamer of 7 subunits arranged in a ring. Interacts with the chaperonin GroEL.

The protein resides in the cytoplasm. Functionally, together with the chaperonin GroEL, plays an essential role in assisting protein folding. The GroEL-GroES system forms a nano-cage that allows encapsulation of the non-native substrate proteins and provides a physical environment optimized to promote and accelerate protein folding. GroES binds to the apical surface of the GroEL ring, thereby capping the opening of the GroEL channel. The chain is Co-chaperonin GroES from Syntrophomonas wolfei subsp. wolfei (strain DSM 2245B / Goettingen).